A 417-amino-acid polypeptide reads, in one-letter code: Gamma-glutamyl phosphate reductase (417 aa).

This sequence belongs to the gamma-glutamyl phosphate reductase family.

The protein resides in the cytoplasm. It carries out the reaction L-glutamate 5-semialdehyde + phosphate + NADP(+) = L-glutamyl 5-phosphate + NADPH + H(+). It functions in the pathway amino-acid biosynthesis; L-proline biosynthesis; L-glutamate 5-semialdehyde from L-glutamate: step 2/2. In terms of biological role, catalyzes the NADPH-dependent reduction of L-glutamate 5-phosphate into L-glutamate 5-semialdehyde and phosphate. The product spontaneously undergoes cyclization to form 1-pyrroline-5-carboxylate. This Escherichia coli O7:K1 (strain IAI39 / ExPEC) protein is Gamma-glutamyl phosphate reductase.